The primary structure comprises 499 residues: ATP synthase subunit alpha, chloroplastic (499 aa).

170–177 (GDRQTGKT) lines the ATP pocket.

Belongs to the ATPase alpha/beta chains family. F-type ATPases have 2 components, CF(1) - the catalytic core - and CF(0) - the membrane proton channel. CF(1) has five subunits: alpha(3), beta(3), gamma(1), delta(1), epsilon(1). CF(0) has four main subunits: a, b, b' and c.

Its subcellular location is the plastid. It localises to the chloroplast thylakoid membrane. It catalyses the reaction ATP + H2O + 4 H(+)(in) = ADP + phosphate + 5 H(+)(out). Functionally, produces ATP from ADP in the presence of a proton gradient across the membrane. The alpha chain is a regulatory subunit. The polypeptide is ATP synthase subunit alpha, chloroplastic (Emiliania huxleyi (Coccolithophore)).